Here is a 338-residue protein sequence, read N- to C-terminus: Heat-inducible transcription repressor HrcA (338 aa).

It belongs to the HrcA family.

Functionally, negative regulator of class I heat shock genes (grpE-dnaK-dnaJ and groELS operons). Prevents heat-shock induction of these operons. The protein is Heat-inducible transcription repressor HrcA of Bacillus cereus (strain ATCC 10987 / NRS 248).